An 859-amino-acid chain; its full sequence is Ubiquitin carboxyl-terminal hydrolase 23 (859 aa).

Residues 1-24 (MEVATSSTEITIQTDRDPSSNNNG) are compositionally biased toward polar residues. Residues 1 to 26 (MEVATSSTEITIQTDRDPSSNNNGSC) form a disordered region. Residues 107-410 (AGLQNLGNTC…KAYMLFYVRD (304 aa)) form the USP domain. The active-site Nucleophile is the cysteine 116. Histidine 369 acts as the Proton acceptor in catalysis. Disordered stretches follow at residues 722–749 (MISS…ASQN) and 822–859 (EESY…AYRI).

Belongs to the peptidase C19 family.

The enzyme catalyses Thiol-dependent hydrolysis of ester, thioester, amide, peptide and isopeptide bonds formed by the C-terminal Gly of ubiquitin (a 76-residue protein attached to proteins as an intracellular targeting signal).. Functionally, recognizes and hydrolyzes the peptide bond at the C-terminal Gly of ubiquitin. Involved in the processing of poly-ubiquitin precursors as well as that of ubiquitinated proteins. The sequence is that of Ubiquitin carboxyl-terminal hydrolase 23 (UBP23) from Arabidopsis thaliana (Mouse-ear cress).